The chain runs to 784 residues: Endonuclease MutS2 (784 aa).

335–342 (GPNTGGKT) is a binding site for ATP. Residues 709–784 (LDLRGERYED…GTGVTIVELK (76 aa)) enclose the Smr domain.

It belongs to the DNA mismatch repair MutS family. MutS2 subfamily. As to quaternary structure, homodimer. Binds to stalled ribosomes, contacting rRNA.

Endonuclease that is involved in the suppression of homologous recombination and thus may have a key role in the control of bacterial genetic diversity. Its function is as follows. Acts as a ribosome collision sensor, splitting the ribosome into its 2 subunits. Detects stalled/collided 70S ribosomes which it binds and splits by an ATP-hydrolysis driven conformational change. Acts upstream of the ribosome quality control system (RQC), a ribosome-associated complex that mediates the extraction of incompletely synthesized nascent chains from stalled ribosomes and their subsequent degradation. Probably generates substrates for RQC. The polypeptide is Endonuclease MutS2 (Geobacillus kaustophilus (strain HTA426)).